Reading from the N-terminus, the 247-residue chain is DNA polymerase epsilon subunit D (247 aa).

The segment at 128 to 247 (KKHKADKKVP…EGQNSSDDDS (120 aa)) is disordered. The span at 150–159 (RLKDNDEQII) shows a compositional bias: basic and acidic residues. 3 stretches are compositionally biased toward acidic residues: residues 165–188 (ADME…NDED), 196–215 (EEEE…EVEE), and 224–247 (EEDE…DDDS).

In terms of assembly, heterotetramer. Consists of four subunits: POL2, DPB2, DPB3 and DPB4.

The protein resides in the nucleus. Functionally, as accessory component of the DNA polymerase epsilon (DNA polymerase II) participates in chromosomal DNA replication. The sequence is that of DNA polymerase epsilon subunit D (DPB4) from Debaryomyces hansenii (strain ATCC 36239 / CBS 767 / BCRC 21394 / JCM 1990 / NBRC 0083 / IGC 2968) (Yeast).